The primary structure comprises 183 residues: Probable adenylyl-sulfate kinase (183 aa).

17-24 serves as a coordination point for ATP; that stretch reads GLPGSGKT. Catalysis depends on Ser-91, which acts as the Phosphoserine intermediate.

It belongs to the APS kinase family.

The enzyme catalyses adenosine 5'-phosphosulfate + ATP = 3'-phosphoadenylyl sulfate + ADP + H(+). Its pathway is sulfur metabolism; hydrogen sulfide biosynthesis; sulfite from sulfate: step 2/3. Catalyzes the synthesis of activated sulfate. The protein is Probable adenylyl-sulfate kinase (cysC) of Aeropyrum pernix (strain ATCC 700893 / DSM 11879 / JCM 9820 / NBRC 100138 / K1).